Here is a 3013-residue protein sequence, read N- to C-terminus: Protein furry homolog-like (3013 aa).

Residue Ser-2 is modified to N-acetylserine. The segment at 90 to 109 (DESYEYRPRSSTKSKGDEQQ) is disordered. A Phosphoserine modification is found at Ser-844. Disordered stretches follow at residues 878–897 (SSSTSAGSVRCSPPETLAST) and 1476–1498 (VTSGTTSSSNTMVAPTDGNPDNK). Low complexity predominate over residues 1476 to 1486 (VTSGTTSSSNT). Phosphoserine is present on residues Ser-1914, Ser-1935, Ser-1941, Ser-1945, and Ser-1957. At Thr-1959 the chain carries Phosphothreonine. 3 positions are modified to phosphoserine: Ser-1978, Ser-2272, and Ser-2454. The disordered stretch occupies residues 2459 to 2492 (DKGDTPSLQEYQCSSSTPSLNLTNQEDTDESSEE). Residues 2464 to 2483 (PSLQEYQCSSSTPSLNLTNQ) are compositionally biased toward polar residues. Position 2499 is a phosphoserine (Ser-2499). Disordered regions lie at residues 2508–2567 (LNSD…DTTS) and 2636–2660 (EEEADFSGLSSQDEEEQDGFPEVQT). Polar residues-rich tracts occupy residues 2528-2539 (SEDSTGSITTEE) and 2555-2567 (DNANSRLPEDTTS).

This sequence belongs to the furry protein family. As to expression, widely expressed with higher expression in colon, placenta, brain and cells of lymphoid origin.

In terms of biological role, plays a key role in maintaining the integrity of polarized cell extensions during morphogenesis, regulates the actin cytoskeleton and plays a key role in patterning sensory neuron dendritic fields by promoting avoidance between homologous dendrites as well as by limiting dendritic branching. May function as a transcriptional activator. The polypeptide is Protein furry homolog-like (FRYL) (Homo sapiens (Human)).